Here is a 1565-residue protein sequence, read N- to C-terminus: Major cell-surface adhesin PAc (1565 aa).

Residues 1 to 38 form the signal peptide; it reads MKVKKTYGFRKSKISKTLCGAVLGTVAAVSVAGQKVFA. A compositionally biased stretch (low complexity) spans 42–54; it reads TTTSDVDTKVVGT. Residues 42 to 81 are disordered; that stretch reads TTTSDVDTKVVGTQTGNPATNLPEAQGSASKEAEQSQTKL. The segment covering 72–81 has biased composition (basic and acidic residues); that stretch reads KEAEQSQTKL. 4 Ag I/II A repeats span residues 146 to 220, 221 to 302, 303 to 384, and 385 to 466; these read KKTT…QKTN, AANQ…QEAN, AANE…KKAN, and AANE…QKDL. Residues 203 to 448 are heptad repeats of Y-[EQ]-X-X-L-A-X; it reads EAKLAQYQAD…KRNADAKADY (246 aa). Positions 461–834 are V-region (lectin-like); sequence KYQKDLADYP…VNVPKVTKEK (374 aa). 2 disordered regions span residues 827-985 and 1486-1511; these read VPKV…PTPP and NTVKTTTPEDPADPTDPQDPSSPRTS. One copy of the P1 repeat lies at 848 to 887; it reads TYETEKPLKPAPVAPNYEKEPTPPTRTPDQAEPNKPTPPT. The stretch at 888–926 is one P2 repeat; it reads YETEKPLEPAPVEPSYEAEPTPPTRTPDQAEPNKPTPPT. The stretch at 927–964 is one P3 repeat; sequence YETEKPLEPAPVEPSYEAEPTPPTPTPDQPEPNKPVEP. The segment covering 946–961 has biased composition (pro residues); it reads PTPPTPTPDQPEPNKP. Positions 1532-1536 match the LPXTG sorting signal motif; that stretch reads LPNTG. Thr1535 is modified (pentaglycyl murein peptidoglycan amidated threonine). Residues 1536-1565 constitute a propeptide, removed by sortase; sequence GVTNNAYMPLLGIIGLVTSFSLLGLKAKKD.

Belongs to the antigen I/II family.

The protein localises to the secreted. The protein resides in the cell wall. Surface protein antigen implicated in dental caries. This chain is Major cell-surface adhesin PAc, found in Streptococcus mutans.